A 126-amino-acid polypeptide reads, in one-letter code: S-adenosylmethionine decarboxylase proenzyme (126 aa).

Serine 63 serves as the catalytic Schiff-base intermediate with substrate; via pyruvic acid. At serine 63 the chain carries Pyruvic acid (Ser); by autocatalysis. The active-site Proton acceptor; for processing activity is the histidine 68. Cysteine 83 functions as the Proton donor; for catalytic activity in the catalytic mechanism.

This sequence belongs to the prokaryotic AdoMetDC family. Type 1 subfamily. Heterotetramer of two alpha and two beta chains arranged as a dimer of alpha/beta heterodimers. Pyruvate serves as cofactor. In terms of processing, is synthesized initially as an inactive proenzyme. Formation of the active enzyme involves a self-maturation process in which the active site pyruvoyl group is generated from an internal serine residue via an autocatalytic post-translational modification. Two non-identical subunits are generated from the proenzyme in this reaction, and the pyruvate is formed at the N-terminus of the alpha chain, which is derived from the carboxyl end of the proenzyme. The post-translation cleavage follows an unusual pathway, termed non-hydrolytic serinolysis, in which the side chain hydroxyl group of the serine supplies its oxygen atom to form the C-terminus of the beta chain, while the remainder of the serine residue undergoes an oxidative deamination to produce ammonia and the pyruvoyl group blocking the N-terminus of the alpha chain.

The enzyme catalyses S-adenosyl-L-methionine + H(+) = S-adenosyl 3-(methylsulfanyl)propylamine + CO2. Its pathway is amine and polyamine biosynthesis; S-adenosylmethioninamine biosynthesis; S-adenosylmethioninamine from S-adenosyl-L-methionine: step 1/1. Catalyzes the decarboxylation of S-adenosylmethionine to S-adenosylmethioninamine (dcAdoMet), the propylamine donor required for the synthesis of the polyamines spermine and spermidine from the diamine putrescine. This Clostridium kluyveri (strain NBRC 12016) protein is S-adenosylmethionine decarboxylase proenzyme.